Consider the following 334-residue polypeptide: MTASTDRYAASLRLSVAPMMDWTDRHCRVFHRLLAPSARLYTEMVHANAVIHGDRARLIGFDPVEHPLALQLGGSDPALLAQAAAIAQEWGFDEINLNCGCPSDRVQAGRFGACLMREPALVAECVAAMCAATHLPITVKCRLGVDDDDDYALFARFVDQVVAAGAAMVVVHARNAWLKGLSPKENREVPPLRYDWAYRLKQERPGLPVVLNGGIVAVEPAIAHLQHADGVMLGRAAYHDPYVLHCLDAALNQRPEQPRESLLRAYQPYVESQLAQGLGLKHMTRHVLGLFHGQPGGRAFRQVLSEGAHRPGAGWELVEQALERTDTRSWRVVA.

FMN is bound by residues 18-20 (PMM) and Gln-71. Catalysis depends on Cys-101, which acts as the Proton donor. FMN contacts are provided by residues Lys-140, His-172, 212 to 214 (NGG), and 234 to 235 (GR).

The protein belongs to the Dus family. DusA subfamily. The cofactor is FMN.

It carries out the reaction 5,6-dihydrouridine(20) in tRNA + NADP(+) = uridine(20) in tRNA + NADPH + H(+). It catalyses the reaction 5,6-dihydrouridine(20) in tRNA + NAD(+) = uridine(20) in tRNA + NADH + H(+). The enzyme catalyses 5,6-dihydrouridine(20a) in tRNA + NADP(+) = uridine(20a) in tRNA + NADPH + H(+). The catalysed reaction is 5,6-dihydrouridine(20a) in tRNA + NAD(+) = uridine(20a) in tRNA + NADH + H(+). Catalyzes the synthesis of 5,6-dihydrouridine (D), a modified base found in the D-loop of most tRNAs, via the reduction of the C5-C6 double bond in target uridines. Specifically modifies U20 and U20a in tRNAs. This Xanthomonas axonopodis pv. citri (strain 306) protein is tRNA-dihydrouridine(20/20a) synthase.